The primary structure comprises 62 residues: MARYRHSXSRSRSRYRRRRRRRSRYRSRRRRYRGRRRRRSRRGRRRRGYSRRRYSRRRRRRY.

Positions 1 to 62 (MARYRHSXSR…RYSRRRRRRY (62 aa)) are disordered.

Belongs to the protamine P1 family. In terms of tissue distribution, testis.

It is found in the nucleus. The protein localises to the chromosome. Functionally, protamines substitute for histones in the chromatin of sperm during the haploid phase of spermatogenesis. They compact sperm DNA into a highly condensed, stable and inactive complex. The sequence is that of Sperm protamine P1 (PRM1) from Petrogale xanthopus (Yellow-footed rock wallaby).